The chain runs to 200 residues: Probable GTP-binding protein EngB (200 aa).

The EngB-type G domain maps to 22–199; it reads NVAEVAFLGR…QDKITGYLFG (178 aa). Residues 30-37, 57-61, 85-88, 155-158, and 177-180 contribute to the GTP site; these read GRSNVGKS, GKTQL, DLPG, TKID, and FLSN. 2 residues coordinate Mg(2+): serine 37 and threonine 59.

Belongs to the TRAFAC class TrmE-Era-EngA-EngB-Septin-like GTPase superfamily. EngB GTPase family. Requires Mg(2+) as cofactor.

Its function is as follows. Necessary for normal cell division and for the maintenance of normal septation. The chain is Probable GTP-binding protein EngB from Aliarcobacter butzleri (strain RM4018) (Arcobacter butzleri).